The primary structure comprises 763 residues: Disintegrin and metalloproteinase domain-containing protein 29 (763 aa).

Positions 1-31 (MNMIEALLSMRVLFLTQVFGIFLCFPGLTKA) are cleaved as a signal peptide. Positions 32-200 (GHLHYHSSIE…ILKQSSFEDW (169 aa)) are excised as a propeptide. N-linked (GlcNAc...) asparagine glycosylation is found at N164, N177, and N223. The Extracellular segment spans residues 201–684 (WTHTKIVELV…KTNKKKHFFY (484 aa)). The Peptidase M12B domain occupies 205–396 (KIVELVVVVD…NTRCLMENMY (192 aa)). Disulfide bonds link C313-C390, C353-C375, and C355-C360. N-linked (GlcNAc...) asparagine glycans are attached at residues N374, N424, N434, N475, and N584. A Disintegrin domain is found at 403–489 (RTRCGNGVVE…ECPDDAYVED (87 aa)). C461 and C481 are disulfide-bonded. 3 disulfide bridges follow: C631–C642, C636–C648, and C650–C659. The EGF-like domain occupies 631–660 (CTPAFCNYRGICNNKHHCHCNFHWDPPNCM). The chain crosses the membrane as a helical span at residues 685-705 (LLLLQLIILACLLSCLLWLLF). Residues 706 to 763 (NIKGSKRKPQVQPTPVKTKKVSKKVPSQKPSPVPSPSLPQLRMPSRSASPTSSIKSTN) lie on the Cytoplasmic side of the membrane. The disordered stretch occupies residues 712–763 (RKPQVQPTPVKTKKVSKKVPSQKPSPVPSPSLPQLRMPSRSASPTSSIKSTN). The segment covering 751-763 (RSASPTSSIKSTN) has biased composition (polar residues).

The protein localises to the membrane. Its function is as follows. May be involved in spermatogenesis and fertilization. Seems to be a non catalytic metalloprotease-like protein. This chain is Disintegrin and metalloproteinase domain-containing protein 29 (Adam29), found in Mus musculus (Mouse).